A 350-amino-acid chain; its full sequence is Twinfilin-1 (350 aa).

N-acetylserine is present on Ser-2. The region spanning 2 to 139 (SHQTGIQASE…SLHGYKKYLL (138 aa)) is the ADF-H 1 domain. Phosphoserine is present on residues Ser-143 and Ser-277. One can recognise an ADF-H 2 domain in the interval 175–313 (LQGVAFPISR…TADFLYDEVH (139 aa)). A Phosphotyrosine modification is found at Tyr-309. The tract at residues 317–350 (HAHKQSFAKPKGPAGKRGIRRLIRGPAEAEATTD) is disordered. Phosphothreonine is present on Thr-349.

Belongs to the actin-binding proteins ADF family. Twinfilin subfamily. In terms of assembly, interacts with G-actin; ADP-actin form and capping protein (CP). May also be able to interact with TWF2 and phosphoinositides, PI(4,5)P2. When bound to PI(4,5)P2, it is down-regulated. Interacts with ACTG1. Post-translationally, phosphorylated on serine and threonine residues. In terms of tissue distribution, widely expressed with highest levels in brain, liver and kidney. Also expressed in heart, lung and testis. Not detected in spleen or skeletal muscle.

The protein resides in the cytoplasm. It is found in the cytoskeleton. Its function is as follows. Actin-binding protein involved in motile and morphological processes. Inhibits actin polymerization, likely by sequestering G-actin. By capping the barbed ends of filaments, it also regulates motility. Seems to play an important role in clathrin-mediated endocytosis and distribution of endocytic organelles. The polypeptide is Twinfilin-1 (Twf1) (Mus musculus (Mouse)).